The sequence spans 29 residues: Cytochrome b6-f complex subunit 8 (29 aa).

Residues 3–23 (IVSLAWAALMVVFTFSLSLVV) traverse the membrane as a helical segment.

Belongs to the PetN family. In terms of assembly, the 4 large subunits of the cytochrome b6-f complex are cytochrome b6, subunit IV (17 kDa polypeptide, PetD), cytochrome f and the Rieske protein, while the 4 small subunits are PetG, PetL, PetM and PetN. The complex functions as a dimer.

It is found in the plastid. Its subcellular location is the chloroplast thylakoid membrane. In terms of biological role, component of the cytochrome b6-f complex, which mediates electron transfer between photosystem II (PSII) and photosystem I (PSI), cyclic electron flow around PSI, and state transitions. The polypeptide is Cytochrome b6-f complex subunit 8 (Solanum bulbocastanum (Wild potato)).